The sequence spans 199 residues: Imidazoleglycerol-phosphate dehydratase (199 aa).

It belongs to the imidazoleglycerol-phosphate dehydratase family.

The protein localises to the cytoplasm. It carries out the reaction D-erythro-1-(imidazol-4-yl)glycerol 3-phosphate = 3-(imidazol-4-yl)-2-oxopropyl phosphate + H2O. It participates in amino-acid biosynthesis; L-histidine biosynthesis; L-histidine from 5-phospho-alpha-D-ribose 1-diphosphate: step 6/9. In Acidithiobacillus ferrooxidans (strain ATCC 53993 / BNL-5-31) (Leptospirillum ferrooxidans (ATCC 53993)), this protein is Imidazoleglycerol-phosphate dehydratase.